Consider the following 178-residue polypeptide: ATP synthase subunit delta (178 aa).

It belongs to the ATPase delta chain family. In terms of assembly, F-type ATPases have 2 components, F(1) - the catalytic core - and F(0) - the membrane proton channel. F(1) has five subunits: alpha(3), beta(3), gamma(1), delta(1), epsilon(1). F(0) has three main subunits: a(1), b(2) and c(10-14). The alpha and beta chains form an alternating ring which encloses part of the gamma chain. F(1) is attached to F(0) by a central stalk formed by the gamma and epsilon chains, while a peripheral stalk is formed by the delta and b chains.

It is found in the cell inner membrane. Functionally, f(1)F(0) ATP synthase produces ATP from ADP in the presence of a proton or sodium gradient. F-type ATPases consist of two structural domains, F(1) containing the extramembraneous catalytic core and F(0) containing the membrane proton channel, linked together by a central stalk and a peripheral stalk. During catalysis, ATP synthesis in the catalytic domain of F(1) is coupled via a rotary mechanism of the central stalk subunits to proton translocation. This protein is part of the stalk that links CF(0) to CF(1). It either transmits conformational changes from CF(0) to CF(1) or is implicated in proton conduction. This Pseudomonas entomophila (strain L48) protein is ATP synthase subunit delta.